We begin with the raw amino-acid sequence, 134 residues long: Small ribosomal subunit protein bS6 (134 aa).

This sequence belongs to the bacterial ribosomal protein bS6 family.

In terms of biological role, binds together with bS18 to 16S ribosomal RNA. The protein is Small ribosomal subunit protein bS6 of Pelodictyon phaeoclathratiforme (strain DSM 5477 / BU-1).